A 1357-amino-acid polypeptide reads, in one-letter code: Ubiquitin carboxyl-terminal hydrolase 19 (1357 aa).

3 disordered regions span residues 1–52 (MSAG…PTKD), 162–239 (LSPI…SDSA), and 275–296 (VSPR…EKDD). Over 1 to 1330 (MSAGTSATGP…TTSDEGCLRY (1330 aa)) the chain is Cytoplasmic. 2 stretches are compositionally biased toward basic and acidic residues: residues 28 to 52 (DRAN…PTKD) and 171 to 182 (SEPRRAKQEARN). The 90-residue stretch at 51–140 (KDELLLDWRQ…VPLLTWPSLL (90 aa)) folds into the CS 1 domain. Residues 194–206 (SGASPGAQAGPSA) are compositionally biased toward low complexity. Phosphoserine occurs at positions 221 and 283. Positions 321 to 423 (LAFVKNDSYE…RQSQRWGGLE (103 aa)) constitute a CS 2 domain. A disordered region spans residues 432-479 (AKVAVPTGPTPLDSTPPGGGPLPLTGQEEARAVEKEKPKARSEDSGLD). Over residues 437–457 (PTGPTPLDSTPPGGGPLPLTG) the composition is skewed to low complexity. Residues 459-475 (EEARAVEKEKPKARSED) show a composition bias toward basic and acidic residues. Residues 536 to 1253 (TGLVNLGNTC…YAYVLFYRRR (718 aa)) enclose the USP domain. The active-site Nucleophile is C545. Residues C830, C833, C847, C850, C856, C860, H868, and C872 each coordinate Zn(2+). Residues 830–872 (CAACQRKQQSEDEKLKRCTRCYRVGYCNQFCQKTHWPDHKGLC) form an MYND-type zinc finger. Residues 962–981 (DTGAHRMWPPADRGPVPSTS) form a disordered region. The active-site Proton acceptor is the H1204. The segment covering 1259-1271 (RPPRAAHAEHHPD) has biased composition (basic and acidic residues). Disordered regions lie at residues 1259–1278 (RPPR…AAEA) and 1292–1320 (AEEE…PRGP). A helical membrane pass occupies residues 1331–1351 (FVLGTVAALVALVLNVFYPLV). Residues 1352–1357 (SQSRWR) are Lumenal-facing.

In terms of assembly, interacts with RNF123. Interacts with BIRC2/c-IAP1, BIRC3/c-IAP2 and XIAP/BIRC4. Interacts with HIF1A (via N-terminus). Expressed in testis, heart, kidney and skeletal muscle. Low levels of expression are detectable in all other tissues screened.

It is found in the endoplasmic reticulum membrane. The enzyme catalyses Thiol-dependent hydrolysis of ester, thioester, amide, peptide and isopeptide bonds formed by the C-terminal Gly of ubiquitin (a 76-residue protein attached to proteins as an intracellular targeting signal).. In terms of biological role, deubiquitinating enzyme that regulates the degradation of various proteins by removing ubiquitin moieties, thereby preventing their proteasomal degradation. Stabilizes RNF123, which promotes CDKN1B degradation and contributes to cell proliferation. Decreases the levels of ubiquitinated proteins during skeletal muscle formation and acts to repress myogenesis. Modulates transcription of major myofibrillar proteins. Also involved in turnover of endoplasmic-reticulum-associated degradation (ERAD) substrates. Mechanistically, deubiquitinates and thereby stabilizes several E3 ligases involved in the ERAD pathway including SYVN1 or MARCHF6. Regulates the stability of other E3 ligases including BIRC2/c-IAP1 and BIRC3/c-IAP2 by preventing their ubiquitination. Required for cells to mount an appropriate response to hypoxia by rescuing HIF1A from degradation in a non-catalytic manner and by mediating the deubiquitination of FUNDC1. Attenuates mitochondrial damage and ferroptosis by targeting and stabilizing NADPH oxidase 4/NOX4. Negatively regulates TNF-alpha- and IL-1beta-triggered NF-kappa-B activation by hydrolyzing 'Lys-27'- and 'Lys-63'-linked polyubiquitin chains from MAP3K7. Modulates also the protein level and aggregation of polyQ-expanded huntingtin/HTT through HSP90AA1. This chain is Ubiquitin carboxyl-terminal hydrolase 19 (Usp19), found in Rattus norvegicus (Rat).